The following is a 126-amino-acid chain: Bactofilin BacO (126 aa).

The protein belongs to the bactofilin family. As to quaternary structure, interacts with BacN and probably also BacP, the 3 proteins colocalize as an extended structure. Interacts with PadC.

It localises to the cytoplasm. The protein localises to the cytoskeleton. Its function is as follows. A non-essential component of the chromosome segregation machinery. Positions the ParA-ParB-parS chromosome segregation machinery within the cell; BacP seems to be the most important bactofilin in this process. Forms a heteropolymeric, subpolar scaffold in the cell; BacP probably forms the core, BacO contributes to position and integrity while BacN does not seem to contribute to assembly. The protein is Bactofilin BacO of Myxococcus xanthus (strain DK1622).